The following is a 398-amino-acid chain: Neuroplastin (398 aa).

The first 28 residues, M1 to A28, serve as a signal peptide directing secretion. Ig-like domains are found at residues Q29–T134, P148–K235, and P238–T329. Topologically, residues Q29–P339 are extracellular. C52 and C116 form a disulfide bridge. The interval R149–S161 is narpin; mediates binding with FGFR1 and has antidepressant-like activity. An intrachain disulfide couples C170 to C218. N171, N197, N229, N284, N296, and N317 each carry an N-linked (GlcNAc...) asparagine glycan. Residues C259 and C316 are joined by a disulfide bond. Residues L340 to Y360 form a helical membrane-spanning segment. The Cytoplasmic segment spans residues E361–N398. Residues R365–N398 form a disordered region.

In terms of assembly, interacts with ATP2B1; this interaction stabilizes ATP2B1 and increases ATPase activity; this interaction controls T cell calcium homeostasis following T cell activation. Interacts with XKR8; promoting its localization at the cell membrane. Isoform 1 is ubiquitously expressed. Isoform 2 is expressed in brain cortex and cerebellum (at protein level).

The protein localises to the cell membrane. It is found in the postsynaptic density. Functionally, probable homophilic and heterophilic cell adhesion molecule involved in long term potentiation at hippocampal excitatory synapses through activation of p38MAPK. May also regulate neurite outgrowth by activating the FGFR1 signaling pathway. May play a role in synaptic plasticity. Also acts as a chaperone for ATP2B1; stabilizes ATP2B1 and increases its ATPase activity. Promotes localization of XKR8 at the cell membrane. This is Neuroplastin (NPTN) from Homo sapiens (Human).